A 537-amino-acid polypeptide reads, in one-letter code: Pentatricopeptide repeat-containing protein At4g32450, mitochondrial (537 aa).

Residues 1 to 110 (MIYTLTRGSL…EHSEIINQRN (110 aa)) constitute a mitochondrion transit peptide. Positions 113 to 140 (WQSSDGCSSYGTTGNGVPQENNTGGNHF) are enriched in polar residues. The disordered stretch occupies residues 113–148 (WQSSDGCSSYGTTGNGVPQENNTGGNHFQQDHSGHS). 6 PPR repeats span residues 145–179 (SGHSSLDELDSICREGKVKKAVEIIKSWRNEGYVV), 180–210 (DLPRLFWIAQLCGDAQALQEAKVVHEFITSS), 215–249 (DISAYNSIIEMYSGCGSVEDALTVFNSMPERNLET), 250–280 (WCGVIRCFAKNGQGEDAIDTFSRFKQEGNKP), 281–316 (DGEMFKEIFFACGVLGDMNEGLLHFESMYKEYGIIP), and 317–347 (CMEHYVSLVKMLAEPGYLDEALRFVESMEPN). Positions 412–442 (YGIRYMAAGDISRPENRELYMALKSLKEHMI) are type E(+) motif. A type DYW motif region spans residues 443 to 537 (EIGYVPLSKL…DGVCSCREYW (95 aa)).

It belongs to the PPR family. PCMP-H subfamily.

The protein resides in the mitochondrion. This chain is Pentatricopeptide repeat-containing protein At4g32450, mitochondrial (PCMP-H63), found in Arabidopsis thaliana (Mouse-ear cress).